A 273-amino-acid chain; its full sequence is Homeobox protein Hox-C13b (273 aa).

Positions 201–260 (GRKKRVPYTKIQLKELEKEYAASKFITKDRRRRISATTSLSERQVTIWFQNRRVKEKKFV) form a DNA-binding region, homeobox.

The protein belongs to the Abd-B homeobox family.

It localises to the nucleus. Its function is as follows. Sequence-specific transcription factor which is part of a developmental regulatory system that provides cells with specific positional identities on the anterior-posterior axis. Plays a role in early embryonic development. This is Homeobox protein Hox-C13b (hoxc13b) from Danio rerio (Zebrafish).